We begin with the raw amino-acid sequence, 290 residues long: Sodium/potassium-transporting ATPase subunit beta-2 (290 aa).

Residues 1-39 are Cytoplasmic-facing; that stretch reads MVIQKEKKSCGQVVEEWKEFVWNPRTHQFMGRTGTSWAF. Residues 40 to 67 form a helical; Signal-anchor for type II membrane protein membrane-spanning segment; it reads ILLFYLVFYGFLTAMFTLTMWVMLQTVS. At 68-290 the chain is on the extracellular side; sequence DHTPKYQDRL…VAFKLRINKT (223 aa). Asparagine 96 and asparagine 118 each carry an N-linked (GlcNAc...) asparagine glycan. Residues cysteine 129 and cysteine 150 are joined by a disulfide bond. N-linked (GlcNAc...) asparagine glycans are attached at residues asparagine 153 and asparagine 159. The cysteines at positions 160 and 177 are disulfide-linked. Residues asparagine 193, asparagine 197, and asparagine 238 are each glycosylated (N-linked (GlcNAc...) asparagine). The interval 193–290 is immunoglobulin-like; it reads NQSMNVTCAG…VAFKLRINKT (98 aa). Cysteine 200 and cysteine 261 form a disulfide bridge.

It belongs to the X(+)/potassium ATPases subunit beta family. As to quaternary structure, the sodium/potassium-transporting ATPase is composed of a catalytic alpha subunit, an auxiliary non-catalytic beta subunit and an additional regulatory subunit. Interacts with BSG.

It is found in the cell membrane. In terms of biological role, this is the non-catalytic component of the active enzyme, which catalyzes the hydrolysis of ATP coupled with the exchange of Na(+) and K(+) ions across the plasma membrane. The exact function of the beta-2 subunit is not known. Functionally, mediates cell adhesion of neurons and astrocytes, and promotes neurite outgrowth. This is Sodium/potassium-transporting ATPase subunit beta-2 (ATP1B2) from Ochotona curzoniae (Black-lipped pika).